Here is a 1859-residue protein sequence, read N- to C-terminus: Retinitis pigmentosa 1-like 1 protein (1859 aa).

Disordered stretches follow at residues 1–22 (MNSTPGDTRDAPAPSHPAPSHR) and 115–154 (RKPPKTSREPGRLQRKSPSAGQAQVFQGGHEAPETSYSWK). The Doublecortin 1 domain occupies 42-126 (KKITFLKRGD…PPKTSREPGR (85 aa)). Residues 115–126 (RKPPKTSREPGR) are compositionally biased toward basic and acidic residues. Residues 130 to 139 (KSPSAGQAQV) show a composition bias toward polar residues. Positions 160–239 (RRLTLVKNGD…NEAFRCLEME (80 aa)) constitute a Doublecortin 2 domain. Disordered stretches follow at residues 263–301 (PNAKQSVIHSRGRSGGKLRQVSLTSERSGLSDHPASGHR), 426–445 (IWRNPLATPEGTGPTPRRRW), 457–593 (WRQE…TQSH), 700–750 (MPQE…TSKA), 868–920 (CFGR…TPSA), 952–997 (NTEV…GVLS), 1152–1211 (TEDF…YPEL), 1227–1255 (ATGGEETGKGGRKQTWGNAPEQSVHSTML), 1298–1350 (GSQD…RVRE), and 1567–1859 (LQSK…DLDF). Positions 457 to 472 (WRQEANHRKGHDKDNL) are enriched in basic and acidic residues. Polar residues-rich tracts occupy residues 499 to 512 (GSDTLHPVSSASSH) and 535 to 551 (PETQSTERALSDTSVSA). A compositionally biased stretch (low complexity) spans 716-728 (SPSNSPSAGNQAS). Over residues 734–750 (PFSSSLDLQEPQATSKA) the composition is skewed to polar residues. A compositionally biased stretch (low complexity) spans 870–883 (GRESASNGSTSSGH). 3 stretches are compositionally biased toward polar residues: residues 1241-1252 (TWGNAPEQSVHS), 1336-1345 (ESPQHFSESN), and 1567-1577 (LQSKKGGSSNR). Positions 1616-1632 (GEGKQRLRAEEDPEILK) are enriched in basic and acidic residues. The span at 1641-1652 (PEEDEATEEDGE) shows a compositional bias: acidic residues. The segment covering 1700–1720 (EASRERQQEVEGRHQDVKEDS) has biased composition (basic and acidic residues). Polar residues predominate over residues 1756-1778 (SHHTACSSRALSLDNSSQVSQKG).

In terms of assembly, interacts with RP1; has a synergistic effect with RP1 in photoreceptor differentiation. Retinal-specific; expressed in photoreceptor.

It is found in the cytoplasm. The protein localises to the cytoskeleton. The protein resides in the cilium axoneme. It localises to the cell projection. Its subcellular location is the cilium. It is found in the photoreceptor outer segment. Its function is as follows. Required for the differentiation of photoreceptor cells. Plays a role in the organization of outer segment of rod and cone photoreceptors. In Mus musculus (Mouse), this protein is Retinitis pigmentosa 1-like 1 protein (Rp1l1).